The chain runs to 338 residues: Nucleoid-associated protein PA14_59050 (338 aa).

Belongs to the YejK family.

The protein resides in the cytoplasm. It is found in the nucleoid. This is Nucleoid-associated protein PA14_59050 from Pseudomonas aeruginosa (strain UCBPP-PA14).